Here is a 358-residue protein sequence, read N- to C-terminus: UDP-N-acetylglucosamine--N-acetylmuramyl-(pentapeptide) pyrophosphoryl-undecaprenol N-acetylglucosamine transferase (358 aa).

UDP-N-acetyl-alpha-D-glucosamine contacts are provided by residues 11–13, Asn-120, Arg-161, Ser-188, and Gln-282; that span reads TGG.

This sequence belongs to the glycosyltransferase 28 family. MurG subfamily.

It localises to the cell inner membrane. It catalyses the reaction di-trans,octa-cis-undecaprenyl diphospho-N-acetyl-alpha-D-muramoyl-L-alanyl-D-glutamyl-meso-2,6-diaminopimeloyl-D-alanyl-D-alanine + UDP-N-acetyl-alpha-D-glucosamine = di-trans,octa-cis-undecaprenyl diphospho-[N-acetyl-alpha-D-glucosaminyl-(1-&gt;4)]-N-acetyl-alpha-D-muramoyl-L-alanyl-D-glutamyl-meso-2,6-diaminopimeloyl-D-alanyl-D-alanine + UDP + H(+). Its pathway is cell wall biogenesis; peptidoglycan biosynthesis. Functionally, cell wall formation. Catalyzes the transfer of a GlcNAc subunit on undecaprenyl-pyrophosphoryl-MurNAc-pentapeptide (lipid intermediate I) to form undecaprenyl-pyrophosphoryl-MurNAc-(pentapeptide)GlcNAc (lipid intermediate II). This is UDP-N-acetylglucosamine--N-acetylmuramyl-(pentapeptide) pyrophosphoryl-undecaprenol N-acetylglucosamine transferase from Synechococcus sp. (strain CC9902).